The sequence spans 427 residues: Trigger factor (427 aa).

In terms of domain architecture, PPIase FKBP-type spans 163 to 248 (GDTVVIDFVG…VHEVKSKEVP (86 aa)).

It belongs to the FKBP-type PPIase family. Tig subfamily.

Its subcellular location is the cytoplasm. It catalyses the reaction [protein]-peptidylproline (omega=180) = [protein]-peptidylproline (omega=0). Its function is as follows. Involved in protein export. Acts as a chaperone by maintaining the newly synthesized protein in an open conformation. Functions as a peptidyl-prolyl cis-trans isomerase. In Streptococcus uberis (strain ATCC BAA-854 / 0140J), this protein is Trigger factor.